The sequence spans 179 residues: Probable mitochondrial import inner membrane translocase subunit Tim17 1 (179 aa).

3 helical membrane-spanning segments follow: residues 17–37 (CGGA…IKGF), 61–81 (LVGG…CSLV), and 113–133 (LSSA…GIVV).

It belongs to the Tim17/Tim22/Tim23 family. In terms of assembly, component of the TIM23 complex at least composed of Tim23, Tim17 (Tim17a1, Tim17a2 or Tim17b1) and a Tim50. The complex interacts with the Tim44 component of the PAM complex.

The protein resides in the mitochondrion inner membrane. Functionally, essential component of the TIM23 complex, a complex that mediates the translocation of transit peptide-containing proteins across the mitochondrial inner membrane. This chain is Probable mitochondrial import inner membrane translocase subunit Tim17 1 (Tim17b1), found in Drosophila melanogaster (Fruit fly).